The chain runs to 174 residues: Non-classical export protein 2 homolog 1 (174 aa).

The Cytoplasmic portion of the chain corresponds to 1–7 (MLSAADN). Residues 8–28 (LVRIINAVFLIISIGLISGLI) form a helical membrane-spanning segment. The Extracellular segment spans residues 29–41 (GTQTKHSSRVNFC). A helical membrane pass occupies residues 42-62 (MFAAVYGLVTDSLYGFLANFW). Residues 63–69 (TSLTYPA) lie on the Cytoplasmic side of the membrane. A helical transmembrane segment spans residues 70-90 (ILLVLDFLNFIFTFVAATALA). At 91–122 (VGIRCHSCKNKTYLEQNKIIQGSSSRCHQSQA) the chain is on the extracellular side. The chain crosses the membrane as a helical span at residues 123–143 (AVAFFYFSCFLFLIKVTVATM). The Cytoplasmic portion of the chain corresponds to 144-174 (GMMQNGGFGSNTGFSRRRARRQMGIPTISQV).

Belongs to the NCE102 family.

Its subcellular location is the cell membrane. Its function is as follows. Involved in membrane organization. Required for the formation of membrane compartments of CAN1 (MCCs), localization of CAN1 at the MCCs and subsequent invagination of the plasma membrane at the MCCs sites. Involved in eisosome organization and might act as a sensor of sphingolipids that regulates plasma membrane function. Involved in a novel pathway of export of proteins that lack a cleavable signal sequence. Non-classical export pathway also functions as an alternative clearance/detoxification pathway to eliminate damaged material, when the basic repair pathway is not sufficient. The polypeptide is Non-classical export protein 2 homolog 1 (FHN1) (Saccharomyces cerevisiae (strain ATCC 204508 / S288c) (Baker's yeast)).